The sequence spans 503 residues: uncharacterized protein (503 aa).

A helical transmembrane segment spans residues 26–46 (ILFLLLGLIILVNISINVATA). 4 disordered regions span residues 155–176 (RPLS…MSQM), 311–381 (YDAR…ESHE), 436–456 (QISD…NPGG), and 472–503 (VQEN…GKLN). Basic and acidic residues-rich tracts occupy residues 311–322 (YDARDQWRRGTE) and 334–346 (NPRE…DHNS). Residues 348 to 367 (AHRQNFSSHTHSQPNHSPPQ) are compositionally biased toward polar residues. Residues 493-503 (SLHRSRTGKLN) are compositionally biased toward basic residues.

The protein resides in the membrane. This is an uncharacterized protein from Mus musculus (Mouse).